The sequence spans 304 residues: N-acetylmuramic acid 6-phosphate etherase (304 aa).

Residue Ser-2 is modified to Phosphoserine. The 164-residue stretch at 59-222 (AYESFQNGGR…STAVMVKIGK (164 aa)) folds into the SIS domain. Glu-87 serves as the catalytic Proton donor. The active site involves Glu-118.

Belongs to the GCKR-like family. MurNAc-6-P etherase subfamily. In terms of assembly, homodimer.

The catalysed reaction is N-acetyl-D-muramate 6-phosphate + H2O = N-acetyl-D-glucosamine 6-phosphate + (R)-lactate. The protein operates within amino-sugar metabolism; N-acetylmuramate degradation. Its function is as follows. Specifically catalyzes the cleavage of the D-lactyl ether substituent of MurNAc 6-phosphate, producing GlcNAc 6-phosphate and D-lactate. This Bacillus subtilis (strain 168) protein is N-acetylmuramic acid 6-phosphate etherase.